Reading from the N-terminus, the 274-residue chain is Putative phosphatase BUsg_029 (274 aa).

The Nucleophile role is filled by aspartate 8. Aspartate 8 is a binding site for Mg(2+). Leucine 9 provides a ligand contact to phosphate. Aspartate 10 lines the Mg(2+) pocket. Phosphate contacts are provided by residues 42 to 43 (SG) and lysine 191. Aspartate 214 serves as a coordination point for Mg(2+). Phosphate is bound at residue asparagine 217.

The protein belongs to the HAD-like hydrolase superfamily. Cof family. Requires Mg(2+) as cofactor.

The protein is Putative phosphatase BUsg_029 of Buchnera aphidicola subsp. Schizaphis graminum (strain Sg).